We begin with the raw amino-acid sequence, 135 residues long: Phosphoinositide-interacting protein (135 aa).

Positions 1–21 (MEVLPKALEVDERSPESKDLL) are disordered. The segment covering 8-19 (LEVDERSPESKD) has biased composition (basic and acidic residues). The next 2 helical transmembrane spans lie at 54 to 74 (IIIMSVGAAILLFGVAITCVA) and 92 to 112 (PAFLSLGLMMLVCGLVWVPII).

In terms of assembly, interacts with TRPV1. Strongly expressed in most dorsal root ganglia (DRG) and trigeminal neurons. Expressed by most peptidergic (CGRP+) and non-peptidergic (IB4+) DRG neurons. Weakly expressed in other parts of the peripheral nervous system (PNS) including sympathetic and enteric neurons. Not expressed in the spinal cord.

It is found in the membrane. Functionally, regulatory subunit of TRPV1, a molecular sensor of noxious heat and capsaicin. Positively regulates TRPV1 channel activity via phosphatidylinositol 4,5-bisphosphate (PIP2). Binds various phosphoinositide, including phosphatidylinositol 4,5-bisphosphate (PIP2), but not phosphatidylinositol (PI). This chain is Phosphoinositide-interacting protein (Pirt), found in Mus musculus (Mouse).